Reading from the N-terminus, the 307-residue chain is Ventral anterior homeobox 2 (307 aa).

3 disordered regions span residues 1–70 (MFDQ…DKLL), 155–175 (RTKQKKDQTKDTDKRSSSTSE), and 197–254 (PPPN…PSPR). Basic and acidic residues predominate over residues 25–38 (CRDRGRESKSRTEV). Low complexity predominate over residues 46 to 62 (SSTDTPGTSASTPTSSS). Residues 103 to 162 (PKRTRTSFTAEQLYRLELEFQRCQYVVGRERTELARQLNLSETQVKVWFQNRRTKQKKDQ) constitute a DNA-binding region (homeobox). The segment covering 159–170 (KKDQTKDTDKRS) has biased composition (basic and acidic residues). Over residues 202–249 (LLAHPHPGNGSLLGSPSVSTSSGVSSSTTPPGAGSGTFGLSLSSLSGT) the composition is skewed to low complexity.

Belongs to the EMX homeobox family. In terms of tissue distribution, expressed in the anterior neural keel and later in the preoptic area, optic stalk and ventral retina.

The protein localises to the nucleus. Transcription factor that may function in dorsoventral specification of the forebrain. Required for closure of the choroid fissure and together with vax1 is required for optic nerve differentiation and to limit retinal development to the optic cup. The sequence is that of Ventral anterior homeobox 2 (vax2) from Danio rerio (Zebrafish).